The primary structure comprises 155 residues: Endoribonuclease YbeY (155 aa).

Residues His114, His118, and His124 each contribute to the Zn(2+) site.

This sequence belongs to the endoribonuclease YbeY family. Requires Zn(2+) as cofactor.

The protein resides in the cytoplasm. In terms of biological role, single strand-specific metallo-endoribonuclease involved in late-stage 70S ribosome quality control and in maturation of the 3' terminus of the 16S rRNA. The chain is Endoribonuclease YbeY from Shigella dysenteriae serotype 1 (strain Sd197).